A 697-amino-acid polypeptide reads, in one-letter code: DNA ligase (697 aa).

Residues 34-38 (DKTYD), 83-84 (SL), and Glu114 each bind NAD(+). Lys116 (N6-AMP-lysine intermediate) is an active-site residue. 4 residues coordinate NAD(+): Arg137, Glu171, Lys315, and Lys339. Residues Cys430, Cys433, Cys448, and Cys453 each contribute to the Zn(2+) site. The BRCT domain maps to 616–697 (KKSSKLNNLN…FHNLLKEENA (82 aa)).

Belongs to the NAD-dependent DNA ligase family. LigA subfamily. The cofactor is Mg(2+). It depends on Mn(2+) as a cofactor.

It catalyses the reaction NAD(+) + (deoxyribonucleotide)n-3'-hydroxyl + 5'-phospho-(deoxyribonucleotide)m = (deoxyribonucleotide)n+m + AMP + beta-nicotinamide D-nucleotide.. In terms of biological role, DNA ligase that catalyzes the formation of phosphodiester linkages between 5'-phosphoryl and 3'-hydroxyl groups in double-stranded DNA using NAD as a coenzyme and as the energy source for the reaction. It is essential for DNA replication and repair of damaged DNA. The protein is DNA ligase of Mycoplasmopsis synoviae (strain 53) (Mycoplasma synoviae).